The following is a 652-amino-acid chain: RNA-binding KH domain-containing protein RCF3 (652 aa).

The span at 1-14 shows a compositional bias: basic and acidic residues; sequence MERSRSKRNYHYDQ. The interval 1–63 is disordered; that stretch reads MERSRSKRNY…NGRPSKSHPE (63 aa). A compositionally biased stretch (gly residues) spans 34-55; the sequence is FGGGGGGNNRYRGGGGGGGGNG. 2 KH domains span residues 67–139 and 175–245; these read TTTY…QEAL and RVVT…LAIV. Residues 253 to 307 form a disordered region; sequence QHRDRSNFQGRSHSPERSFAAAGDDYMPQLRRQSSDRFPRGNFRNNNFSSRQSNY. Low complexity predominate over residues 292 to 306; the sequence is RGNFRNNNFSSRQSN. KH domains are found at residues 324–391, 408–476, and 576–640; these read ELVF…QEAL, LITT…LVEL, and RSTL…QSLL.

In terms of assembly, homodimer. Interacts with CPL1. Interacts with RS40 and RS41. Interacts with DRB1/HYL1 and SE. Interacts with CPL2. As to expression, expressed in roots, cotyledons, leaves, flowers and siliques.

The protein localises to the nucleus. The protein resides in the nucleus speckle. Its function is as follows. Acts as a negative regulator of osmotic stress-induced gene expression. Involved in the regulation of thermotolerance responses under heat stress. Functions as an upstream regulator of heat stress transcription factor (HSF) genes. Negatively regulates HSFA1A, HSFA1B and HSFA1D, but positively controls the expression of HSFA1E, HSFA3, HSFA9, HSFB3, and DREB2C. Forms a complex with CPL1 that modulates co-transcriptional processes such as mRNA capping and polyadenylation, and functions to repress stress-inducible gene expression. Regulates pre-mRNA processing under salt stress. Involved in primary miRNA processing and pri-miRNA biogenesis. Binds both intronless and intron-containing pri-miRNAs. Acts as a regulator of biotic stress response gene expression and basal JA-mediated responses involved in defense. Acts as a negative regulator of resistance to the fungal pathogen Fusarium oxysporum. This Arabidopsis thaliana (Mouse-ear cress) protein is RNA-binding KH domain-containing protein RCF3.